Here is a 72-residue protein sequence, read N- to C-terminus: Sperm protein associated with the nucleus on the X chromosome N1 (72 aa).

The tract at residues 1–44 is disordered; the sequence is MEQPTSSINGEKRKSPCESNNENDEMQETPNRDLAPEPSLKKMK.

The protein belongs to the SPAN-X family.

The chain is Sperm protein associated with the nucleus on the X chromosome N1 (SPANXN1) from Homo sapiens (Human).